Reading from the N-terminus, the 309-residue chain is Homoserine O-succinyltransferase (309 aa).

Cysteine 142 serves as the catalytic Acyl-thioester intermediate. Substrate is bound by residues lysine 163 and serine 192. Histidine 235 serves as the catalytic Proton acceptor. Glutamate 237 is an active-site residue. Residue arginine 249 coordinates substrate.

Belongs to the MetA family. As to quaternary structure, homodimer.

The protein resides in the cytoplasm. It carries out the reaction L-homoserine + succinyl-CoA = O-succinyl-L-homoserine + CoA. Its pathway is amino-acid biosynthesis; L-methionine biosynthesis via de novo pathway; O-succinyl-L-homoserine from L-homoserine: step 1/1. Its function is as follows. Transfers a succinyl group from succinyl-CoA to L-homoserine, forming succinyl-L-homoserine. This chain is Homoserine O-succinyltransferase, found in Escherichia fergusonii (strain ATCC 35469 / DSM 13698 / CCUG 18766 / IAM 14443 / JCM 21226 / LMG 7866 / NBRC 102419 / NCTC 12128 / CDC 0568-73).